The sequence spans 328 residues: Fructokinase-2 (328 aa).

It belongs to the carbohydrate kinase PfkB family.

It catalyses the reaction D-fructose + ATP = D-fructose 6-phosphate + ADP + H(+). The protein operates within glycan biosynthesis; starch biosynthesis. May play an important role in maintaining the flux of carbon towards starch formation. This Solanum lycopersicum (Tomato) protein is Fructokinase-2 (FRK2).